The primary structure comprises 427 residues: MSAIVDIIGREILDSRGNPTVECDVLLESGTMGRAAVPSGASTGSREAIELRDGEAGRYNGKGVLKAVEHINTEISEAIMGLDASEQAFLDKTLLELDGTDNKSRLGANAMLAVSMAVAKAAAEEAGLPLYRYFGGSGAMQLPVPMMNIVNGGAHANNSLDIQEFMIVPVSQPTFREALRCGAEVFHALKKILGDRGMSTAVGDEGGFAPNFGSNDECLSTILQAIEKAGYRAGEDVLLALDCAASEFYHDGKYQLAGEGLQLSSAEFSDYLATLADKFPIVSIEDGMHESDWDGWKLLTDRLGKKVQLVGDDLFVTNTRILKEGIEKGIANSILIKINQIGTLTETFAAIEMAKRARYTAVISHRSGETEDSTIADIAVGLNAGQIKTGSLSRSDRISKYNQLLRIEEDLGDIASYPGKSAFYNLR.

Gln-163 contacts (2R)-2-phosphoglycerate. Glu-205 acts as the Proton donor in catalysis. Residues Asp-242, Glu-285, and Asp-312 each contribute to the Mg(2+) site. Residues Lys-337, Arg-366, Ser-367, and Lys-388 each contribute to the (2R)-2-phosphoglycerate site. Lys-337 serves as the catalytic Proton acceptor.

Belongs to the enolase family. Mg(2+) serves as cofactor.

The protein resides in the cytoplasm. The protein localises to the secreted. Its subcellular location is the cell surface. It carries out the reaction (2R)-2-phosphoglycerate = phosphoenolpyruvate + H2O. The protein operates within carbohydrate degradation; glycolysis; pyruvate from D-glyceraldehyde 3-phosphate: step 4/5. Its function is as follows. Catalyzes the reversible conversion of 2-phosphoglycerate (2-PG) into phosphoenolpyruvate (PEP). It is essential for the degradation of carbohydrates via glycolysis. In Burkholderia thailandensis (strain ATCC 700388 / DSM 13276 / CCUG 48851 / CIP 106301 / E264), this protein is Enolase.